Reading from the N-terminus, the 225-residue chain is MADS-box transcription factor 5 (225 aa).

The MADS-box domain maps to 1 to 61 (MGRGKVELKR…GRLFEFSTSS (61 aa)). The K-box domain maps to 89 to 179 (ELSNYQEYLK…KRKIQETSGE (91 aa)).

May interact with the K-box of MADS6.

It is found in the nucleus. Functionally, probable transcription factor. In Oryza sativa subsp. indica (Rice), this protein is MADS-box transcription factor 5 (MADS5).